We begin with the raw amino-acid sequence, 184 residues long: Threonylcarbamoyl-AMP synthase (184 aa).

A YrdC-like domain is found at 1-184 (MNNLLAVIEL…IFTQHIFRQG (184 aa)).

The protein belongs to the SUA5 family. TsaC subfamily.

Its subcellular location is the cytoplasm. It catalyses the reaction L-threonine + hydrogencarbonate + ATP = L-threonylcarbamoyladenylate + diphosphate + H2O. Its function is as follows. Required for the formation of a threonylcarbamoyl group on adenosine at position 37 (t(6)A37) in tRNAs that read codons beginning with adenine. Catalyzes the conversion of L-threonine, HCO(3)(-)/CO(2) and ATP to give threonylcarbamoyl-AMP (TC-AMP) as the acyladenylate intermediate, with the release of diphosphate. This is Threonylcarbamoyl-AMP synthase from Haemophilus ducreyi (strain 35000HP / ATCC 700724).